The primary structure comprises 498 residues: ATP synthase subunit beta, chloroplastic (498 aa).

Residue 172 to 179 (GGAGVGKT) participates in ATP binding.

Belongs to the ATPase alpha/beta chains family. In terms of assembly, F-type ATPases have 2 components, CF(1) - the catalytic core - and CF(0) - the membrane proton channel. CF(1) has five subunits: alpha(3), beta(3), gamma(1), delta(1), epsilon(1). CF(0) has four main subunits: a(1), b(1), b'(1) and c(9-12).

It is found in the plastid. It localises to the chloroplast thylakoid membrane. It catalyses the reaction ATP + H2O + 4 H(+)(in) = ADP + phosphate + 5 H(+)(out). In terms of biological role, produces ATP from ADP in the presence of a proton gradient across the membrane. The catalytic sites are hosted primarily by the beta subunits. The chain is ATP synthase subunit beta, chloroplastic from Phalaenopsis aphrodite subsp. formosana (Moth orchid).